We begin with the raw amino-acid sequence, 458 residues long: ATP synthase subunit beta (458 aa).

ATP is bound at residue 148–155; the sequence is GGAGVGKT.

This sequence belongs to the ATPase alpha/beta chains family. As to quaternary structure, F-type ATPases have 2 components, CF(1) - the catalytic core - and CF(0) - the membrane proton channel. CF(1) has five subunits: alpha(3), beta(3), gamma(1), delta(1), epsilon(1). CF(0) has three main subunits: a(1), b(2) and c(9-12). The alpha and beta chains form an alternating ring which encloses part of the gamma chain. CF(1) is attached to CF(0) by a central stalk formed by the gamma and epsilon chains, while a peripheral stalk is formed by the delta and b chains.

The protein resides in the cell inner membrane. It carries out the reaction ATP + H2O + 4 H(+)(in) = ADP + phosphate + 5 H(+)(out). Its function is as follows. Produces ATP from ADP in the presence of a proton gradient across the membrane. The catalytic sites are hosted primarily by the beta subunits. This Shewanella pealeana (strain ATCC 700345 / ANG-SQ1) protein is ATP synthase subunit beta.